Reading from the N-terminus, the 213-residue chain is Phosphatidylserine decarboxylase proenzyme (213 aa).

Ser-180 serves as the catalytic Schiff-base intermediate with substrate; via pyruvic acid. The residue at position 180 (Ser-180) is a Pyruvic acid (Ser); by autocatalysis.

Belongs to the phosphatidylserine decarboxylase family. PSD-A subfamily. In terms of assembly, heterodimer of a large membrane-associated beta subunit and a small pyruvoyl-containing alpha subunit. The cofactor is pyruvate. Post-translationally, is synthesized initially as an inactive proenzyme. Formation of the active enzyme involves a self-maturation process in which the active site pyruvoyl group is generated from an internal serine residue via an autocatalytic post-translational modification. Two non-identical subunits are generated from the proenzyme in this reaction, and the pyruvate is formed at the N-terminus of the alpha chain, which is derived from the carboxyl end of the proenzyme. The post-translation cleavage follows an unusual pathway, termed non-hydrolytic serinolysis, in which the side chain hydroxyl group of the serine supplies its oxygen atom to form the C-terminus of the beta chain, while the remainder of the serine residue undergoes an oxidative deamination to produce ammonia and the pyruvoyl prosthetic group on the alpha chain.

The protein localises to the cell membrane. It catalyses the reaction a 1,2-diacyl-sn-glycero-3-phospho-L-serine + H(+) = a 1,2-diacyl-sn-glycero-3-phosphoethanolamine + CO2. Its pathway is phospholipid metabolism; phosphatidylethanolamine biosynthesis; phosphatidylethanolamine from CDP-diacylglycerol: step 2/2. In terms of biological role, catalyzes the formation of phosphatidylethanolamine (PtdEtn) from phosphatidylserine (PtdSer). The polypeptide is Phosphatidylserine decarboxylase proenzyme (Carboxydothermus hydrogenoformans (strain ATCC BAA-161 / DSM 6008 / Z-2901)).